The chain runs to 444 residues: Methylenetetrahydrofolate--tRNA-(uracil-5-)-methyltransferase TrmFO (444 aa).

An FAD-binding site is contributed by 10-15 (GAGLAG).

It belongs to the MnmG family. TrmFO subfamily. FAD serves as cofactor.

The protein localises to the cytoplasm. It carries out the reaction uridine(54) in tRNA + (6R)-5,10-methylene-5,6,7,8-tetrahydrofolate + NADH + H(+) = 5-methyluridine(54) in tRNA + (6S)-5,6,7,8-tetrahydrofolate + NAD(+). The enzyme catalyses uridine(54) in tRNA + (6R)-5,10-methylene-5,6,7,8-tetrahydrofolate + NADPH + H(+) = 5-methyluridine(54) in tRNA + (6S)-5,6,7,8-tetrahydrofolate + NADP(+). Functionally, catalyzes the folate-dependent formation of 5-methyl-uridine at position 54 (M-5-U54) in all tRNAs. The protein is Methylenetetrahydrofolate--tRNA-(uracil-5-)-methyltransferase TrmFO of Streptococcus pneumoniae (strain 70585).